We begin with the raw amino-acid sequence, 215 residues long: 3-demethoxyubiquinol 3-hydroxylase (215 aa).

Fe cation-binding residues include glutamate 64, glutamate 94, histidine 97, glutamate 146, glutamate 178, and histidine 181.

Belongs to the COQ7 family. The cofactor is Fe cation.

Its subcellular location is the cell membrane. The enzyme catalyses a 5-methoxy-2-methyl-3-(all-trans-polyprenyl)benzene-1,4-diol + AH2 + O2 = a 3-demethylubiquinol + A + H2O. It participates in cofactor biosynthesis; ubiquinone biosynthesis. Functionally, catalyzes the hydroxylation of 2-nonaprenyl-3-methyl-6-methoxy-1,4-benzoquinol during ubiquinone biosynthesis. This is 3-demethoxyubiquinol 3-hydroxylase from Pseudomonas aeruginosa (strain LESB58).